Here is a 180-residue protein sequence, read N- to C-terminus: ATP-dependent protease subunit HslV (180 aa).

The active site involves T7. Residues G165, C168, and T171 each contribute to the Na(+) site.

The protein belongs to the peptidase T1B family. HslV subfamily. As to quaternary structure, a double ring-shaped homohexamer of HslV is capped on each side by a ring-shaped HslU homohexamer. The assembly of the HslU/HslV complex is dependent on binding of ATP.

The protein resides in the cytoplasm. The enzyme catalyses ATP-dependent cleavage of peptide bonds with broad specificity.. With respect to regulation, allosterically activated by HslU binding. Functionally, protease subunit of a proteasome-like degradation complex believed to be a general protein degrading machinery. The protein is ATP-dependent protease subunit HslV of Bacillus cytotoxicus (strain DSM 22905 / CIP 110041 / 391-98 / NVH 391-98).